The following is a 581-amino-acid chain: Pyridine nucleotide-disulfide oxidoreductase domain-containing protein 2 (581 aa).

Residue 38–71 coordinates FAD; the sequence is VVIGAGHNGLVAAAYLQRLGVNTAVFERRHVIGG.

It belongs to the carotenoid/retinoid oxidoreductase family. As to quaternary structure, interacts with COX5B; this interaction may contribute to localize PYROXD2 to the inner face of the inner mitochondrial membrane.

Its subcellular location is the mitochondrion matrix. Its function is as follows. Probable oxidoreductase that may play a role as regulator of mitochondrial function. This Mus musculus (Mouse) protein is Pyridine nucleotide-disulfide oxidoreductase domain-containing protein 2.